The chain runs to 261 residues: Enoyl-[acyl-carrier-protein] reductase [NADH] FabI (261 aa).

NAD(+) is bound by residues glycine 15, 21–22 (SI), glutamine 42, 66–67 (DV), and methionine 94. Alanine 97 provides a ligand contact to substrate. Active-site proton acceptor residues include tyrosine 147 and tyrosine 157. Residues lysine 164 and 193–197 (IKTLA) each bind NAD(+).

Belongs to the short-chain dehydrogenases/reductases (SDR) family. FabI subfamily. As to quaternary structure, homotetramer.

It catalyses the reaction a 2,3-saturated acyl-[ACP] + NAD(+) = a (2E)-enoyl-[ACP] + NADH + H(+). It participates in lipid metabolism; fatty acid biosynthesis. Functionally, catalyzes the reduction of a carbon-carbon double bond in an enoyl moiety that is covalently linked to an acyl carrier protein (ACP). Involved in the elongation cycle of fatty acid which are used in the lipid metabolism. The protein is Enoyl-[acyl-carrier-protein] reductase [NADH] FabI (fabI) of Rickettsia typhi (strain ATCC VR-144 / Wilmington).